The following is a 773-amino-acid chain: Polyribonucleotide nucleotidyltransferase (773 aa).

Residues Asp-532 and Asp-538 each contribute to the Mg(2+) site. The region spanning 598–657 (PRVITIKVPVDKIGEVIGPKGKVINAITEETGAQISIEDDGTVFVGATDGLSAQAAINKI) is the KH domain. Residues 669–738 (GERFLGTVVK…KRGKISLVLV (70 aa)) form the S1 motif domain. Positions 749–773 (APADAGAAQEFGSGTAPADAATASS) are disordered.

The protein belongs to the polyribonucleotide nucleotidyltransferase family. Mg(2+) is required as a cofactor.

The protein resides in the cytoplasm. The enzyme catalyses RNA(n+1) + phosphate = RNA(n) + a ribonucleoside 5'-diphosphate. Functionally, involved in mRNA degradation. Catalyzes the phosphorolysis of single-stranded polyribonucleotides processively in the 3'- to 5'-direction. The sequence is that of Polyribonucleotide nucleotidyltransferase from Mycobacterium leprae (strain Br4923).